Reading from the N-terminus, the 390-residue chain is Nucleotide-sugar uncharacterized transporter 1 (390 aa).

A run of 10 helical transmembrane segments spans residues 61-81 (ICGP…IIFM), 89-109 (IGFE…YLLM), 128-148 (SLLP…LANV), 155-175 (VGFY…AEFL), 182-201 (SFMK…VATV), 206-228 (FSLF…KILW), 249-269 (ITLL…ALSF), 278-298 (AILV…LALG), 306-326 (VVLG…IFGS), and 329-349 (GFIS…YTYL). Low complexity predominate over residues 356–365 (LKTSSSSSAL). The segment at 356-390 (LKTSSSSSALSEKKSRFSDLKDDDKNLEPYGSEAV) is disordered. The segment covering 366–382 (SEKKSRFSDLKDDDKNL) has biased composition (basic and acidic residues).

Belongs to the TPT transporter family. TPT (TC 2.A.7.9) subfamily.

Its subcellular location is the membrane. The chain is Nucleotide-sugar uncharacterized transporter 1 from Arabidopsis thaliana (Mouse-ear cress).